The following is a 202-amino-acid chain: FMN-dependent NADH:quinone oxidoreductase (202 aa).

Residues serine 9, 15-17, 95-98, and 139-142 each bind FMN; these read SAS, MYNF, and TSGG.

Belongs to the azoreductase type 1 family. In terms of assembly, homodimer. It depends on FMN as a cofactor.

The enzyme catalyses 2 a quinone + NADH + H(+) = 2 a 1,4-benzosemiquinone + NAD(+). It carries out the reaction N,N-dimethyl-1,4-phenylenediamine + anthranilate + 2 NAD(+) = 2-(4-dimethylaminophenyl)diazenylbenzoate + 2 NADH + 2 H(+). Quinone reductase that provides resistance to thiol-specific stress caused by electrophilic quinones. Its function is as follows. Also exhibits azoreductase activity. Catalyzes the reductive cleavage of the azo bond in aromatic azo compounds to the corresponding amines. The sequence is that of FMN-dependent NADH:quinone oxidoreductase from Pseudomonas savastanoi pv. phaseolicola (strain 1448A / Race 6) (Pseudomonas syringae pv. phaseolicola (strain 1448A / Race 6)).